Reading from the N-terminus, the 364-residue chain is Alpha-2-HS-glycoprotein (364 aa).

The segment at residues 1–15 (MKSFLLLFCLAQLCS) is a signal peptide (or 17). Residues 27–133 (YKEPACDDPD…QFSVLFTKCD (107 aa)) enclose the Cystatin fetuin-A-type 1 domain. Disulfide bonds link Cys32–Cys355, Cys89–Cys100, Cys114–Cys132, Cys146–Cys149, Cys208–Cys219, and Cys230–Cys248. Asn99 carries N-linked (GlcNAc...) asparagine glycosylation. Phosphoserine is present on residues Ser134, Ser135, and Ser138. Residues 144 to 256 (KLCPDCPLLA…TCTLFQTQPV (113 aa)) enclose the Cystatin fetuin-A-type 2 domain. N-linked (GlcNAc...) asparagine glycosylation is found at Asn156 and Asn176. Ser301 is a glycosylation site (O-linked (GalNAc...) serine). Position 319 is a phosphothreonine (Thr319). Phosphoserine occurs at positions 321, 325, 328, and 330. A glycan (O-linked (GalNAc...) threonine) is linked at Thr339.

It belongs to the fetuin family. Post-translationally, phosphorylated by FAM20C in the extracellular medium.

It localises to the secreted. This chain is Alpha-2-HS-glycoprotein (AHSG), found in Ovis aries (Sheep).